Reading from the N-terminus, the 532-residue chain is Cilia- and flagella-associated protein 97 (532 aa).

Ser19 bears the Phosphoserine mark. Disordered regions lie at residues 28-83 (ETNS…PVEN), 116-263 (IPNR…TPDI), 306-333 (KAAKKGKEKHEPDVSSKSSSVLDSSLDH), 398-421 (LSRQAEKPGSKSTIPRSADHPPKL), and 485-532 (GQYS…TAWL). Over residues 35–49 (KQNDDPKERIDKDTK) the composition is skewed to basic and acidic residues. The segment covering 50 to 63 (NVNSNTGMQTTENY) has biased composition (polar residues). Over residues 67-82 (KGNERNVKFPPEHPVE) the composition is skewed to basic and acidic residues. Over residues 127–139 (GEDDYYTDGEESS) the composition is skewed to acidic residues. Phosphothreonine is present on Thr133. Phosphoserine occurs at positions 138 and 139. Low complexity-rich tracts occupy residues 170-185 (SSSSSSSLSSSSSGSG) and 194-205 (DSHLSDSSPSSK). A Phosphoserine modification is found at Ser218. Positions 227-239 (IKSTETQPSSTTP) are enriched in polar residues. Ser248 carries the post-translational modification Phosphoserine. The span at 253–263 (TDVSPLSTPDI) shows a compositional bias: polar residues. The segment covering 320–329 (SSKSSSVLDS) has biased composition (low complexity). Ser330 is modified (phosphoserine). Positions 374-450 (GKNYSFTREE…ALLKRLEAVK (77 aa)) form a coiled coil. Polar residues predominate over residues 493 to 503 (SRTSSATSGLS).

This sequence belongs to the CFAP97 family.

The protein is Cilia- and flagella-associated protein 97 of Homo sapiens (Human).